The sequence spans 331 residues: Cytosolic Fe-S cluster assembly factor NBP35 (331 aa).

Over residues 1–10 (MSPSQTQIEK) the composition is skewed to polar residues. The segment at 1–32 (MSPSQTQIEKSQLAAPEPEHCPGPESELAGQG) is disordered. Residues Cys21, Cys35, Cys38, and Cys44 each contribute to the [4Fe-4S] cluster site. 75–82 (GKGGVGKS) serves as a coordination point for ATP. Cys249 and Cys252 together coordinate [4Fe-4S] cluster.

This sequence belongs to the Mrp/NBP35 ATP-binding proteins family. NUBP1/NBP35 subfamily. As to quaternary structure, heterotetramer of 2 NBP35 and 2 CFD1 chains. It depends on [4Fe-4S] cluster as a cofactor.

Its subcellular location is the cytoplasm. It localises to the nucleus. Its function is as follows. Component of the cytosolic iron-sulfur (Fe/S) protein assembly (CIA) machinery. Required for maturation of extramitochondrial Fe-S proteins. The NBP35-CFD1 heterotetramer forms a Fe-S scaffold complex, mediating the de novo assembly of an Fe-S cluster and its transfer to target apoproteins. Required for biogenesis and export of both ribosomal subunits, which may reflect a role in assembly of the Fe/S clusters in RLI1, a protein which performs rRNA processing and ribosome export. The sequence is that of Cytosolic Fe-S cluster assembly factor NBP35 from Candida albicans (strain SC5314 / ATCC MYA-2876) (Yeast).